Reading from the N-terminus, the 433-residue chain is MKTFVEIVDVYARQILDSRGNPTVEVEVELEDGTVGRAAVPSGASTGIFEAVELRDNDKSRYMGKSVEKAVENVNEIIAEELVGLNVFDQVALDKIMIELDGTDNKGKLGANAMLGVSLACARAAAEYLGISLYQYIGGVNAKVLPVPMMNIMNGGSHADNNVDLQEFMIMPAGAKSFSHALRMCAEIYHTLKNILKDKGLSTGVGDEGGFAPNLESNEEAIQVIIEAVEKAGYKPGEEVFIALDPASSEFFNTETNKYELKGEGRELTPAEMVEYYAKLVEKYPIISIEDGMAEEDWDGWKLMTEKLGGKIQLVGDDLFVTNTKRLSMGIERKVANSILIKLNQIGTLTETLNTIEMAERAGYTAVVSHRSGETEDTTIADLVVAVNAGQIKTGAPARTERVAKYNQLLRIEEELNAMGEYRGLKAFYNIRK.

(2R)-2-phosphoglycerate is bound at residue glutamine 166. The Proton donor role is filled by glutamate 208. Mg(2+)-binding residues include aspartate 245, glutamate 290, and aspartate 317. (2R)-2-phosphoglycerate-binding residues include lysine 342, arginine 371, serine 372, and lysine 393. Lysine 342 (proton acceptor) is an active-site residue.

Belongs to the enolase family. The cofactor is Mg(2+).

It localises to the cytoplasm. It is found in the secreted. Its subcellular location is the cell surface. The catalysed reaction is (2R)-2-phosphoglycerate = phosphoenolpyruvate + H2O. Its pathway is carbohydrate degradation; glycolysis; pyruvate from D-glyceraldehyde 3-phosphate: step 4/5. Functionally, catalyzes the reversible conversion of 2-phosphoglycerate (2-PG) into phosphoenolpyruvate (PEP). It is essential for the degradation of carbohydrates via glycolysis. This chain is Enolase, found in Clostridium novyi (strain NT).